We begin with the raw amino-acid sequence, 222 residues long: Cyclin-dependent kinase inhibitor 3 (222 aa).

Residues K68 to V101 are disordered. Positions G85–V95 are enriched in basic and acidic residues.

It belongs to the CDI family. ICK/KRP subfamily. As to quaternary structure, specifically interacts with CDKA-1, but not with CDKB1-1.

It is found in the nucleus. The protein localises to the nucleoplasm. Its function is as follows. Binds and inhibits CYCD2-1/CDKA-1 complex kinase activity. May target specifically CDKA-1. This is Cyclin-dependent kinase inhibitor 3 (KRP3) from Arabidopsis thaliana (Mouse-ear cress).